A 1342-amino-acid chain; its full sequence is DNA-directed RNA polymerase subunit beta (1342 aa).

This sequence belongs to the RNA polymerase beta chain family. The RNAP catalytic core consists of 2 alpha, 1 beta, 1 beta' and 1 omega subunit. When a sigma factor is associated with the core the holoenzyme is formed, which can initiate transcription.

It catalyses the reaction RNA(n) + a ribonucleoside 5'-triphosphate = RNA(n+1) + diphosphate. DNA-dependent RNA polymerase catalyzes the transcription of DNA into RNA using the four ribonucleoside triphosphates as substrates. The chain is DNA-directed RNA polymerase subunit beta from Tolumonas auensis (strain DSM 9187 / NBRC 110442 / TA 4).